The following is a 1857-amino-acid chain: Peripheral-type benzodiazepine receptor-associated protein 1 (1857 aa).

Disordered stretches follow at residues 1–103, 284–321, and 565–629; these read MEQL…RPED, QRET…QEDA, and PKDL…DTAS. Positions 55–67 are enriched in basic and acidic residues; the sequence is LRSEESSKPKGDG. Residues 87–96 are compositionally biased toward polar residues; the sequence is LGQQASSSGP. A compositionally biased stretch (pro residues) spans 289–298; it reads PLPPSWPPGP. Composition is skewed to low complexity over residues 299-316 and 603-616; these read ALQA…GEAT and SLSN…IHNS. One can recognise an SH3 1 domain in the interval 653–720; the sequence is ARIQVFLARY…PSNFVERVSD (68 aa). The tract at residues 729–789 is disordered; sequence PELADLSHSS…PSPEGLGEPP (61 aa). A compositionally biased stretch (low complexity) spans 755 to 764; it reads GGQSSVGRSQ. Fibronectin type-III domains lie at 791 to 882, 884 to 976, and 981 to 1081; these read VPYP…ARAG, VPSQ…TLPA, and APLD…LAPA. Disordered stretches follow at residues 1083-1311, 1330-1479, and 1501-1601; these read LPAR…SDEE, FSIP…CSRG, and YDSE…RGVR. Positions 1098-1116 are enriched in low complexity; it reads ARAPLASASPGPGDPSSPL. Over residues 1138 to 1147 the composition is skewed to basic and acidic residues; sequence EMAKGSHEDP. The segment covering 1201 to 1218 has biased composition (polar residues); that stretch reads ASSSTQGARAQQAPNTEM. The span at 1259–1274 shows a compositional bias: acidic residues; the sequence is DIQEEEEEEEEEEEEE. The span at 1278 to 1292 shows a compositional bias: polar residues; sequence RTCSFQKQVAGNSIR. A compositionally biased stretch (acidic residues) spans 1333–1346; that stretch reads PEEEEEEEEDEEEE. 2 stretches are compositionally biased toward basic and acidic residues: residues 1420–1429 and 1554–1586; these read RPPDPREHCS and AWEK…EARG. The SH3 2 domain occupies 1625-1693; that stretch reads LPVRIFVALF…PCNMVAEVAV (69 aa). 2 disordered regions span residues 1723–1761 and 1823–1857; these read VYST…VPSA and SNFL…RVQC. An SH3 3 domain is found at 1764–1831; it reads KAPHSMVAAF…PSNFLEGPGP (68 aa).

Belongs to the RIMBP family. Interacts with RIMS1 and RIMS2. Interacts with TSPO. Interacts with CACNA1A. In terms of tissue distribution, predominantly expressed in brain, pituitary gland and thymus in adults. In adult brain, highest expression found in temporal lobe and the putamen, followed by amygdala, caudate nucleus, cerebral cortex, occipital and frontal lobe. A high expression level is also observed in fetal tissues like brain, heart, kidney and thymus.

It is found in the cytoplasm. The protein resides in the mitochondrion. Required for synaptic transmission regulation. It probably controls the recruitement of voltage-gated calcium channels to the presynaptic membrane, and modulates neurotransmitter release. The protein is Peripheral-type benzodiazepine receptor-associated protein 1 of Homo sapiens (Human).